Consider the following 662-residue polypeptide: Cytochrome bo(3) ubiquinol oxidase subunit 1 (662 aa).

The Extracellular portion of the chain corresponds to 1–14 (MFGKLTFDAIPYHE). The helical transmembrane segment at 15 to 35 (PIIMITYIAIILIALCIASTI) threads the bilayer. Residues 36–58 (TYYKKWKYLWYEWFTTVDHKKIS) are Cytoplasmic-facing. Residues 59 to 79 (IMYGILAFVMLFRGFVDAILM) traverse the membrane as a helical segment. Positions 71, 75, and 98 each coordinate a ubiquinone. The Extracellular segment spans residues 80–106 (RTQQVVASAGFKGFLPPHHYDQIFTAH). A heme b-binding site is contributed by His-106. Residues 107 to 127 (GVIMIFFVAMPLVIGLMNLVI) form a helical membrane-spanning segment. Over 128–145 (PLQIGARDVAFPFLNNLS) the chain is Cytoplasmic. The helical transmembrane segment at 146–166 (FWLNVSSAVLLTLSLGIGEFA) threads the bilayer. The Extracellular portion of the chain corresponds to 167–189 (QTGWLAYPPLSGIKYSSGVGVDY). Trp-170 contacts heme b. The chain crosses the membrane as a helical span at residues 190 to 210 (WIWSLQISGVGTTLTGINFLV). Topologically, residues 211–232 (TILKMRAPGMSFFKMPVFTWTS) are cytoplasmic. Residues 233–253 (LCTNILIVISFPVLTVTLVLL) form a helical membrane-spanning segment. Residues 254 to 277 (TLDRYFNFHFFTNDLGGNAMMYVN) lie on the Extracellular side of the membrane. The helical transmembrane segment at 278 to 298 (LIWIWGHPEVYILVLPVFGVF) threads the bilayer. A Cu(2+)-binding site is contributed by His-284. Residues 284–288 (HPEVY) constitute a cross-link (1'-histidyl-3'-tyrosine (His-Tyr)). Tyr-288 is a binding site for Fe(II)-heme o. The Cytoplasmic segment spans residues 299–309 (SEVVATFSKKR). The chain crosses the membrane as a helical span at residues 310 to 330 (LFGYVSLVWATLSITILSFIV). Residues 331 to 346 (WLHHFFTMGAGADVNT) lie on the Extracellular side of the membrane. Residues His-333 and His-334 each contribute to the Cu(2+) site. A helical transmembrane segment spans residues 347-367 (FFGITTMIIAIPTGVKIFNWL). Residues 368 to 380 (FTIYQGRVHMHSS) are Cytoplasmic-facing. The chain crosses the membrane as a helical span at residues 381-401 (ILWTLGFLVTFSIGGMTGVLL). The Extracellular segment spans residues 402-413 (SVPPADFVLHNS). Residues His-411 and His-419 each coordinate Fe(II)-heme o. A helical membrane pass occupies residues 414–434 (LFLVAHFHNVIIGGVVFGCFA). His-421 serves as a coordination point for heme b. Over 435 to 456 (GINYWFPKLFGFVLNEIWGKRA) the chain is Cytoplasmic. Residues 457–477 (FWFWIIGFFLAFIPLYFLGLM) form a helical membrane-spanning segment. At 478–493 (GMTRRLSQNIDSEFHM) the chain is on the extracellular side. 2 residues coordinate heme b: Arg-481 and Arg-482. The helical transmembrane segment at 494-514 (LLCIAAIGACFIGIGIICQVI) threads the bilayer. Over 515–586 (QFFISIKERR…INSINYHDIH (72 aa)) the chain is Cytoplasmic. The helical transmembrane segment at 587-607 (MPKNTGLGFMISIFSLFFGFS) threads the bilayer. Residue Ala-608 is a topological domain, extracellular. The chain crosses the membrane as a helical span at residues 609–629 (VWHITWLCILSFLAIIISLFI). Residues 630–662 (NSLNEDTEYTISAEEIKKIEHQYWKNIQKAGLK) lie on the Cytoplasmic side of the membrane.

This sequence belongs to the heme-copper respiratory oxidase family. In terms of assembly, the cytochrome bo(3) ubiquinol oxidase complex is a heterooctamer of two A chains, two B chains, two C chains and two D chains. Cu(2+) is required as a cofactor. It depends on heme b as a cofactor. Requires Fe(II)-heme o as cofactor.

It localises to the cell membrane. It carries out the reaction 2 a ubiquinol + O2 + n H(+)(in) = 2 a ubiquinone + 2 H2O + n H(+)(out). Its function is as follows. Cytochrome bo(3) ubiquinol oxidase is the terminal enzyme in the aerobic respiratory chain. Catalyzes the four-electron reduction of O2 to water, using a ubiquinol as a membrane soluble electron donor for molecular oxygen reduction. Has proton pump activity across the membrane in addition to electron transfer, pumping 2 protons/electron and generating a proton motive force. All the redox centers of this enzyme complex are located within the largest subunit, subunit I. Protons are probably pumped via D- and K- channels found in this subunit. This chain is Cytochrome bo(3) ubiquinol oxidase subunit 1 (cyoB), found in Buchnera aphidicola subsp. Acyrthosiphon pisum (strain APS) (Acyrthosiphon pisum symbiotic bacterium).